Consider the following 299-residue polypeptide: Tetrahydromethanopterin S-methyltransferase subunit E (299 aa).

A run of 6 helical transmembrane segments spans residues 57–77 (AISG…TIAW), 80–100 (INAG…AAIV), 133–153 (IGPI…AAYL), 158–178 (LGNP…VGAI), 226–246 (YFCS…IIFL), and 262–282 (VTKT…AAVI).

Belongs to the MtrE family. In terms of assembly, the complex is composed of 8 subunits; MtrA, MtrB, MtrC, MtrD, MtrE, MtrF, MtrG and MtrH.

The protein resides in the cell membrane. The catalysed reaction is 5-methyl-5,6,7,8-tetrahydromethanopterin + coenzyme M + 2 Na(+)(in) = 5,6,7,8-tetrahydromethanopterin + methyl-coenzyme M + 2 Na(+)(out). The protein operates within one-carbon metabolism; methanogenesis from CO(2); methyl-coenzyme M from 5,10-methylene-5,6,7,8-tetrahydromethanopterin: step 2/2. In terms of biological role, part of a complex that catalyzes the formation of methyl-coenzyme M and tetrahydromethanopterin from coenzyme M and methyl-tetrahydromethanopterin. This is an energy-conserving, sodium-ion translocating step. In Methanococcus maripaludis (strain C7 / ATCC BAA-1331), this protein is Tetrahydromethanopterin S-methyltransferase subunit E.